The sequence spans 98 residues: MSMVYINIFLAFTLSFMGLLIYRSHLMSSLLCLEGMMLSLFVMMTVTILTNHLTLASMTPIILLVFAACEAALGLSLLVMISNTYGTDYVQNLNLLQC.

3 helical membrane passes run 1–21 (MSMV…GLLI), 30–50 (LLCL…TILT), and 61–81 (IILL…LVMI).

The protein belongs to the complex I subunit 4L family. Core subunit of respiratory chain NADH dehydrogenase (Complex I) which is composed of 45 different subunits.

The protein localises to the mitochondrion inner membrane. It carries out the reaction a ubiquinone + NADH + 5 H(+)(in) = a ubiquinol + NAD(+) + 4 H(+)(out). Core subunit of the mitochondrial membrane respiratory chain NADH dehydrogenase (Complex I) which catalyzes electron transfer from NADH through the respiratory chain, using ubiquinone as an electron acceptor. Part of the enzyme membrane arm which is embedded in the lipid bilayer and involved in proton translocation. The polypeptide is NADH-ubiquinone oxidoreductase chain 4L (MT-ND4L) (Gulo gulo (Wolverine)).